Reading from the N-terminus, the 117-residue chain is Large ribosomal subunit protein bL20c (117 aa).

Belongs to the bacterial ribosomal protein bL20 family.

It is found in the plastid. The protein resides in the chloroplast. Its function is as follows. Binds directly to 23S ribosomal RNA and is necessary for the in vitro assembly process of the 50S ribosomal subunit. It is not involved in the protein synthesizing functions of that subunit. This is Large ribosomal subunit protein bL20c from Lobularia maritima (Sweet alyssum).